Consider the following 599-residue polypeptide: Proline--tRNA ligase (599 aa).

Belongs to the class-II aminoacyl-tRNA synthetase family. ProS type 1 subfamily. In terms of assembly, homodimer.

It is found in the cytoplasm. The enzyme catalyses tRNA(Pro) + L-proline + ATP = L-prolyl-tRNA(Pro) + AMP + diphosphate. Catalyzes the attachment of proline to tRNA(Pro) in a two-step reaction: proline is first activated by ATP to form Pro-AMP and then transferred to the acceptor end of tRNA(Pro). As ProRS can inadvertently accommodate and process non-cognate amino acids such as alanine and cysteine, to avoid such errors it has two additional distinct editing activities against alanine. One activity is designated as 'pretransfer' editing and involves the tRNA(Pro)-independent hydrolysis of activated Ala-AMP. The other activity is designated 'posttransfer' editing and involves deacylation of mischarged Ala-tRNA(Pro). The misacylated Cys-tRNA(Pro) is not edited by ProRS. In Bifidobacterium animalis subsp. lactis (strain AD011), this protein is Proline--tRNA ligase.